We begin with the raw amino-acid sequence, 318 residues long: MLAPKKMVRGNYSMVTEFILLGLTDRPELQPLLFVLFLVIYLITVGGNLGMMVLIRIDSRLHTPMYYFLASLSCLDLCYSTNVTPKMLVNFLSEKKTISYAACLVQCYFFIAMVITEYYMLAVMAYDRYMAICNPLLYSSKMSKGVCVRLIAGPYIYGFLSGLMETMWTYRLTFCGSNIINHFYCADPPLIRLSCSDTFIKETSMFVVAGFNLSNSLFIILISYLFILIAILRMRSAEGRRKAFSTCGSHLVAVTVFYGTLFCMYVRPPTDKSVEQSKIIAVFYTFVSPMLNPIIYSLRNKDVKHAFWKLVRRNVLSK.

At 1–31 (MLAPKKMVRGNYSMVTEFILLGLTDRPELQP) the chain is on the extracellular side. A glycan (N-linked (GlcNAc...) asparagine) is linked at Asn11. Residues 32–52 (LLFVLFLVIYLITVGGNLGMM) traverse the membrane as a helical segment. Residues 53–60 (VLIRIDSR) are Cytoplasmic-facing. Residues 61–81 (LHTPMYYFLASLSCLDLCYST) form a helical membrane-spanning segment. The Extracellular segment spans residues 82-105 (NVTPKMLVNFLSEKKTISYAACLV). Cys103 and Cys195 are oxidised to a cystine. The chain crosses the membrane as a helical span at residues 106–126 (QCYFFIAMVITEYYMLAVMAY). Residues 127-139 (DRYMAICNPLLYS) are Cytoplasmic-facing. A helical transmembrane segment spans residues 140–160 (SKMSKGVCVRLIAGPYIYGFL). Residues 161-202 (SGLMETMWTYRLTFCGSNIINHFYCADPPLIRLSCSDTFIKE) lie on the Extracellular side of the membrane. The helical transmembrane segment at 203–223 (TSMFVVAGFNLSNSLFIILIS) threads the bilayer. Residues 224–243 (YLFILIAILRMRSAEGRRKA) lie on the Cytoplasmic side of the membrane. Residues 244-264 (FSTCGSHLVAVTVFYGTLFCM) form a helical membrane-spanning segment. Residues 265 to 277 (YVRPPTDKSVEQS) are Extracellular-facing. Residues 278 to 298 (KIIAVFYTFVSPMLNPIIYSL) form a helical membrane-spanning segment. At 299 to 318 (RNKDVKHAFWKLVRRNVLSK) the chain is on the cytoplasmic side.

This sequence belongs to the G-protein coupled receptor 1 family.

It is found in the cell membrane. Potential odorant receptor. The protein is Olfactory receptor 5M5 of Mus musculus (Mouse).